The chain runs to 210 residues: 7-carboxy-7-deazaguanine synthase (210 aa).

Residues 25–27 (IQG) and R40 each bind substrate. The Radical SAM core domain maps to 31 to 210 (HTGTAAYFIR…LQTHKYLNIP (180 aa)). 3 residues coordinate [4Fe-4S] cluster: C44, C48, and C51. Substrate is bound at residue T84. S-adenosyl-L-methionine contacts are provided by residues G86 and 127–129 (SPK). P210 contributes to the substrate binding site.

It belongs to the radical SAM superfamily. 7-carboxy-7-deazaguanine synthase family. As to quaternary structure, homodimer. It depends on [4Fe-4S] cluster as a cofactor. S-adenosyl-L-methionine is required as a cofactor. Requires Mg(2+) as cofactor.

The catalysed reaction is 6-carboxy-5,6,7,8-tetrahydropterin + H(+) = 7-carboxy-7-deazaguanine + NH4(+). It participates in purine metabolism; 7-cyano-7-deazaguanine biosynthesis. In terms of biological role, catalyzes the complex heterocyclic radical-mediated conversion of 6-carboxy-5,6,7,8-tetrahydropterin (CPH4) to 7-carboxy-7-deazaguanine (CDG), a step common to the biosynthetic pathways of all 7-deazapurine-containing compounds. The protein is 7-carboxy-7-deazaguanine synthase of Flavobacterium psychrophilum (strain ATCC 49511 / DSM 21280 / CIP 103535 / JIP02/86).